Consider the following 135-residue polypeptide: UPF0306 protein C8J_1355 (135 aa).

The protein belongs to the UPF0306 family.

This Campylobacter jejuni subsp. jejuni serotype O:6 (strain 81116 / NCTC 11828) protein is UPF0306 protein C8J_1355.